The sequence spans 251 residues: CDP-diacylglycerol pyrophosphatase (251 aa).

Residues 4–24 form a helical membrane-spanning segment; the sequence is AGLLFLVMIVIAVVAAGIGYW.

The protein belongs to the Cdh family.

The protein localises to the cell inner membrane. It catalyses the reaction a CDP-1,2-diacyl-sn-glycerol + H2O = a 1,2-diacyl-sn-glycero-3-phosphate + CMP + 2 H(+). Its pathway is phospholipid metabolism; CDP-diacylglycerol degradation; phosphatidate from CDP-diacylglycerol: step 1/1. The protein is CDP-diacylglycerol pyrophosphatase of Escherichia coli (strain ATCC 8739 / DSM 1576 / NBRC 3972 / NCIMB 8545 / WDCM 00012 / Crooks).